Consider the following 153-residue polypeptide: SsrA-binding protein (153 aa).

The protein belongs to the SmpB family.

It is found in the cytoplasm. In terms of biological role, required for rescue of stalled ribosomes mediated by trans-translation. Binds to transfer-messenger RNA (tmRNA), required for stable association of tmRNA with ribosomes. tmRNA and SmpB together mimic tRNA shape, replacing the anticodon stem-loop with SmpB. tmRNA is encoded by the ssrA gene; the 2 termini fold to resemble tRNA(Ala) and it encodes a 'tag peptide', a short internal open reading frame. During trans-translation Ala-aminoacylated tmRNA acts like a tRNA, entering the A-site of stalled ribosomes, displacing the stalled mRNA. The ribosome then switches to translate the ORF on the tmRNA; the nascent peptide is terminated with the 'tag peptide' encoded by the tmRNA and targeted for degradation. The ribosome is freed to recommence translation, which seems to be the essential function of trans-translation. In Pelotomaculum thermopropionicum (strain DSM 13744 / JCM 10971 / SI), this protein is SsrA-binding protein.